The sequence spans 270 residues: FKBP-type peptidyl-prolyl cis-trans isomerase FkpA (270 aa).

Positions 1–25 (MKSLFKVTLLATTMAVALHAPITFA) are cleaved as a signal peptide. Positions 164–249 (SDTVVVNYKG…VFDVELLDVK (86 aa)) constitute a PPIase FKBP-type domain.

The protein belongs to the FKBP-type PPIase family.

It is found in the periplasm. It carries out the reaction [protein]-peptidylproline (omega=180) = [protein]-peptidylproline (omega=0). PPIases accelerate the folding of proteins. It catalyzes the cis-trans isomerization of proline imidic peptide bonds in oligopeptides. The sequence is that of FKBP-type peptidyl-prolyl cis-trans isomerase FkpA (fkpA) from Escherichia coli (strain K12).